We begin with the raw amino-acid sequence, 332 residues long: DNA repair and recombination protein RadA (332 aa).

126-133 contacts ATP; the sequence is GEFGSGKT.

The protein belongs to the eukaryotic RecA-like protein family.

In terms of biological role, involved in DNA repair and in homologous recombination. Binds and assemble on single-stranded DNA to form a nucleoprotein filament. Hydrolyzes ATP in a ssDNA-dependent manner and promotes DNA strand exchange between homologous DNA molecules. This is DNA repair and recombination protein RadA from Pyrobaculum calidifontis (strain DSM 21063 / JCM 11548 / VA1).